Reading from the N-terminus, the 519-residue chain is AAA-ATPase At4g30250 (519 aa).

The N-terminal stretch at 1 to 24 (MSDYWTTMASLLGMLAFCQTIVQL) is a signal peptide. 252-259 (GPPGTGKS) provides a ligand contact to ATP. Disordered stretches follow at residues 315–335 (GKNK…NGSG) and 467–519 (KSVG…EKEK). Residues 479 to 488 (QEEEEEAEEE) are compositionally biased toward acidic residues. Over residues 489–508 (QEKRALDSPNRRNREVCGFR) the composition is skewed to basic and acidic residues. Positions 509–519 (EEEEEEDEKEK) are enriched in acidic residues.

Belongs to the AAA ATPase family. BCS1 subfamily. Requires Mg(2+) as cofactor.

It catalyses the reaction ATP + H2O = ADP + phosphate + H(+). This is AAA-ATPase At4g30250 from Arabidopsis thaliana (Mouse-ear cress).